The following is a 372-amino-acid chain: Protein phosphatase Mn(2+)-dependent 1K (372 aa).

A mitochondrion-targeting transit peptide spans 1–29; sequence MLSTAFITLVRSGRNQVKKRVLLSSILLQ. Positions 46–61 are critical for association with the BCKDH complex; it reads RCSRFDPDGSGQPATW. The region spanning 94-346 is the PPM-type phosphatase domain; sequence NVGCASLIGK…DNSTAVVVPF (253 aa). Mn(2+) contacts are provided by Asp-127 and Gly-128. Ser-248 is subject to Phosphoserine. Positions 298 and 337 each coordinate Mn(2+).

Belongs to the PP2C family. As to quaternary structure, interacts with E1 and E2 components of the branched-chain alpha-ketoacid dehydrogenase (BCKDH) complex. Interacts with both BCKDHA and BCKDHB chains of the E1 subunit. Interacts with the 24-meric DBT/E2 core of the BCKD complex with a 1:1 stoichiometry; the N-terminal region (residues 49-61) of PPM1K and C-terminal linker of the lipoyl domain of DBT/E2 (residues 145-160) are critical for this interaction whereas the lipoyl prosthetic group is dispensable. Competes with BCKDK for binding to DBT/E2; this interaction is modulated by branched-chain alpha-keto acids (BCKAs). At steady state, BCKDH holoenzyme preferentially binds BCKDK and BCKDHA/E1 is phosphorylated. In response to high levels of BCKAs, BCKDK is replaced by PPM1K leading to BCKDHA/E1 dephosphorylation. It depends on Mn(2+) as a cofactor.

The protein localises to the mitochondrion matrix. The catalysed reaction is O-phospho-L-seryl-[3-methyl-2-oxobutanoate dehydrogenase] + H2O = L-seryl-[3-methyl-2-oxobutanoate dehydrogenase] + phosphate. It carries out the reaction O-phospho-L-seryl-[protein] + H2O = L-seryl-[protein] + phosphate. The protein operates within protein modification. Functionally, serine/threonine-protein phosphatase component of macronutrients metabolism. Together with BCKDK serves as a metabolic regulatory node that coordinates branched-chain amino acids (BCAAs) and protein synthesis with glucose and lipid metabolism via two distinct phosphoprotein targets: BCKDHA/E1a subunit of the branched-chain alpha-ketoacid dehydrogenase (BCKDH) complex and ACLY, a lipogenic enzyme of Krebs cycle. At high levels of branched-chain ketoacids (BCKAs), dephosphorylates and activates mitochondrial BCKDH complex, a multisubunit complex consisting of three components, heterotetrameric E1 composed of BCKDHA and BCKDHB chains, 24-meric E2 core composed of DBT and homodimeric E3 composed of DLD, each involved in different steps of BCAA catabolism. Tightly associates with the E2 subunit of BCKDH complex and dephosphorylates Ser-333 of BCKDHA chain of the E1 subunit likely through on-off binding to individual E2 subunits of the 24-meric E2 core to increase the efficiency of the dephosphorylation reaction. Appears to dephosphorylate and inactivate cytosolic ACLY in response to changes of cellular carbohydrate abundance. Overnutrition and in particular high-fructose diet, activates MLXIPL/ChREBP leading to increased BCKDK to PPM1K ratio, phosphorylation of ACLY on Ser-454 and activation of its enzymatic activity that ultimately results in the generation of acetyl-CoA and malonyl-CoA immediate substrates of de novo lipogenesis. Recognizes phosphosites having SxS or RxxS motifs and strictly depends on Mn(2+) ions for the phosphatase activity. Regulates Ca(2+)-induced opening of mitochondrial transition pore and apoptotic cell death. In Rattus norvegicus (Rat), this protein is Protein phosphatase Mn(2+)-dependent 1K (Ppm1k).